Here is a 192-residue protein sequence, read N- to C-terminus: Thymidine kinase (192 aa).

ATP is bound by residues 9–16 and 87–90; these read SAMNAGKS and DECQ. E88 functions as the Proton acceptor in the catalytic mechanism. C145, C147, C182, and H185 together coordinate Zn(2+).

This sequence belongs to the thymidine kinase family. Homotetramer.

Its subcellular location is the cytoplasm. It carries out the reaction thymidine + ATP = dTMP + ADP + H(+). This is Thymidine kinase from Vibrio parahaemolyticus serotype O3:K6 (strain RIMD 2210633).